The primary structure comprises 299 residues: UPF0282 protein TK1681 (299 aa).

It belongs to the UPF0282 family.

The chain is UPF0282 protein TK1681 from Thermococcus kodakarensis (strain ATCC BAA-918 / JCM 12380 / KOD1) (Pyrococcus kodakaraensis (strain KOD1)).